A 76-amino-acid polypeptide reads, in one-letter code: Sulfur carrier protein TusA (76 aa).

The active-site Cysteine persulfide intermediate is cysteine 14.

Belongs to the sulfur carrier protein TusA family. As to quaternary structure, interacts with IscS.

Its subcellular location is the cytoplasm. Its pathway is tRNA modification. Its function is as follows. Sulfur carrier protein involved in sulfur trafficking in the cell. Part of a sulfur-relay system required for 2-thiolation during synthesis of 2-thiouridine of the modified wobble base 5-methylaminomethyl-2-thiouridine (mnm(5)s(2)U) in tRNA. Interacts with IscS and stimulates its cysteine desulfurase activity. Accepts an activated sulfur from IscS, which is then transferred to TusD, and thus determines the direction of sulfur flow from IscS to 2-thiouridine formation. Also appears to be involved in sulfur transfer for the biosynthesis of molybdopterin. This chain is Sulfur carrier protein TusA, found in Buchnera aphidicola subsp. Acyrthosiphon pisum (strain Tuc7).